The primary structure comprises 122 residues: Autophagy-related protein 8e (122 aa).

Glycine 118 carries Phosphatidylethanolamine amidated glycine lipidation. Residues 119–122 (ASSI) constitute a propeptide, removed in mature form.

Belongs to the ATG8 family. As to quaternary structure, interacts with ATG4. Interacts with SH3P2. Interacts with ATG1A and ATG11. Binds to ATG1A and ATG11 on autophagic vesicles. Post-translationally, the C-terminal 4 residues are removed by ATG4 to expose Gly-118 at the C-terminus. This Gly-118 forms then a thioester bond with the 'Cys-558' of ATG7 (E1-like activating enzyme) before being transferred to the 'Cys-258' of ATG3 (the specific E2 conjugating enzyme), in order to be finally amidated with phosphatidylethanolamine. This lipid modification anchors ATG8 to autophagosomes. As to expression, constitutively expressed.

The protein resides in the cytoplasmic vesicle. It localises to the autophagosome membrane. The protein localises to the vacuole membrane. Its subcellular location is the cytoplasm. It is found in the cytoskeleton. Functionally, ubiquitin-like modifier involved in autophagosomes formation. May mediate the delivery of the autophagosomes to the vacuole via the microtubule cytoskeleton. This is Autophagy-related protein 8e (ATG8E) from Arabidopsis thaliana (Mouse-ear cress).